The sequence spans 173 residues: NADH-quinone oxidoreductase subunit I 2 (173 aa).

2 consecutive 4Fe-4S ferredoxin-type domains span residues 41–73 and 83–112; these read IVLT…LAKA and EYFR…LTPD. [4Fe-4S] cluster is bound by residues Cys-53, Cys-56, Cys-59, Cys-63, Cys-92, Cys-95, Cys-98, and Cys-102. Basic and acidic residues predominate over residues 153 to 163; it reads GKDKGEAEHEA. The interval 153–173 is disordered; the sequence is GKDKGEAEHEAPPVNLKGLLP.

Belongs to the complex I 23 kDa subunit family. As to quaternary structure, NDH-1 is composed of 14 different subunits. Subunits NuoA, H, J, K, L, M, N constitute the membrane sector of the complex. It depends on [4Fe-4S] cluster as a cofactor.

Its subcellular location is the cell inner membrane. It carries out the reaction a quinone + NADH + 5 H(+)(in) = a quinol + NAD(+) + 4 H(+)(out). Its function is as follows. NDH-1 shuttles electrons from NADH, via FMN and iron-sulfur (Fe-S) centers, to quinones in the respiratory chain. The immediate electron acceptor for the enzyme in this species is believed to be ubiquinone. Couples the redox reaction to proton translocation (for every two electrons transferred, four hydrogen ions are translocated across the cytoplasmic membrane), and thus conserves the redox energy in a proton gradient. The chain is NADH-quinone oxidoreductase subunit I 2 from Rhodopseudomonas palustris (strain ATCC BAA-98 / CGA009).